Here is an 89-residue protein sequence, read N- to C-terminus: Small ribosomal subunit protein uS15 (89 aa).

The protein belongs to the universal ribosomal protein uS15 family. In terms of assembly, part of the 30S ribosomal subunit. Forms a bridge to the 50S subunit in the 70S ribosome, contacting the 23S rRNA.

In terms of biological role, one of the primary rRNA binding proteins, it binds directly to 16S rRNA where it helps nucleate assembly of the platform of the 30S subunit by binding and bridging several RNA helices of the 16S rRNA. Forms an intersubunit bridge (bridge B4) with the 23S rRNA of the 50S subunit in the ribosome. In Zymomonas mobilis subsp. mobilis (strain ATCC 31821 / ZM4 / CP4), this protein is Small ribosomal subunit protein uS15.